We begin with the raw amino-acid sequence, 396 residues long: Microcin B17-processing protein McbD (396 aa).

The 356-residue stretch at 41–396 folds into the YcaO domain; that stretch reads ASAAGETLKS…VRESKMVPFP (356 aa).

Its subcellular location is the cytoplasm. Its function is as follows. Necessary to process the inactive microcin B17 (McbA) precursor into the active peptide. This is Microcin B17-processing protein McbD (mcbD) from Escherichia coli.